We begin with the raw amino-acid sequence, 1145 residues long: Nucleolar protein 6 (1145 aa).

The segment at 1-46 (MQKKRNRAGPPQQEAASDDGEMSDSSDKMEVAQGKGKSAVKRAPDA) is disordered.

It belongs to the NRAP family. In terms of assembly, part of the small subunit (SSU) processome, composed of more than 70 proteins and the RNA chaperone small nucleolar RNA (snoRNA) U3.

The protein localises to the nucleus. It is found in the nucleolus. It localises to the chromosome. Functionally, part of the small subunit (SSU) processome, first precursor of the small eukaryotic ribosomal subunit. During the assembly of the SSU processome in the nucleolus, many ribosome biogenesis factors, an RNA chaperone and ribosomal proteins associate with the nascent pre-rRNA and work in concert to generate RNA folding, modifications, rearrangements and cleavage as well as targeted degradation of pre-ribosomal RNA by the RNA exosome. This Xenopus tropicalis (Western clawed frog) protein is Nucleolar protein 6 (nol6).